Consider the following 114-residue polypeptide: Putative small ubiquitin-related modifier 4 (114 aa).

The interval 1–20 (MSTTSRVGSNEVKMEGQKRK) is disordered. The Ubiquitin-like domain occupies 26–104 (THVTLKVKGQ…IDAMLCQQSG (79 aa)). Gly104 is covalently cross-linked (Glycyl lysine isopeptide (Gly-Lys) (interchain with K-? in acceptor proteins)).

The protein belongs to the ubiquitin family. SUMO subfamily. In terms of assembly, interacts with SAE2, SCE1, SIZ1 and MMS21 Covalently attached to a number of proteins.

It is found in the nucleus. Its subcellular location is the cytoplasm. Its function is as follows. Ubiquitin-like protein which can be covalently attached to target lysines as a monomer. Does not seem to be involved in protein degradation and may function as an antagonist of ubiquitin in the degradation process. The chain is Putative small ubiquitin-related modifier 4 (SUMO4) from Arabidopsis thaliana (Mouse-ear cress).